Here is a 476-residue protein sequence, read N- to C-terminus: Transcription factor HBP-1b(c1) (476 aa).

3 disordered regions span residues 1-29 (ESRR…FGAP), 133-159 (HNND…PDID), and 171-207 (QLAA…RKSR). A compositionally biased stretch (low complexity) spans 10–25 (AAAAAAAGDPRGPMPG). Positions 135–144 (NDNWGESSMA) are enriched in polar residues. The segment covering 180-191 (SSDKSRDKLDHK) has biased composition (basic and acidic residues). The bZIP domain maps to 189–252 (DHKSLRRLAQ…SSGDQSQSAS (64 aa)). The basic motif stretch occupies residues 191–211 (KSLRRLAQNREAARKSRLRKK). Residues 201–242 (EAARKSRLRKKAYIQNLESSRLKLTQLEQELQRARQQGIFIS) are a coiled coil. A leucine-zipper region spans residues 217–231 (LESSRLKLTQLEQEL). Residues 256–473 (AVAFDMEYAR…RALSSLWLAR (218 aa)) enclose the DOG1 domain.

Belongs to the bZIP family. In terms of assembly, binds DNA as a dimer.

It localises to the nucleus. In terms of biological role, transcriptional activator that binds specifically to the DNA sequence 5'-TGACG-3'. Recognizes ocs elements like the as-1 motif of the cauliflower mosaic virus 35S promoter. Binding to the as-1-like cis elements mediate auxin- and salicylic acid-inducible transcription. Binds to the hexamer motif 5'-ACGTCA-3' of histone gene promoters. The polypeptide is Transcription factor HBP-1b(c1) (Triticum aestivum (Wheat)).